Consider the following 200-residue polypeptide: LexA repressor (200 aa).

The segment at residues 28 to 48 (RAEISNRLGFRSANAAEEHLK) is a DNA-binding region (H-T-H motif). Catalysis depends on for autocatalytic cleavage activity residues serine 121 and lysine 158.

The protein belongs to the peptidase S24 family. As to quaternary structure, homodimer.

It carries out the reaction Hydrolysis of Ala-|-Gly bond in repressor LexA.. Functionally, represses a number of genes involved in the response to DNA damage (SOS response), including recA and lexA. In the presence of single-stranded DNA, RecA interacts with LexA causing an autocatalytic cleavage which disrupts the DNA-binding part of LexA, leading to derepression of the SOS regulon and eventually DNA repair. The chain is LexA repressor from Hahella chejuensis (strain KCTC 2396).